A 326-amino-acid chain; its full sequence is Cytosolic Fe-S cluster assembly factor NBP35 (326 aa).

The interval 1–38 is disordered; the sequence is MTEIANGQQILPPDYTLKEPEPEHCPGPESENAGKGDS. Residues 16 to 26 show a composition bias toward basic and acidic residues; sequence TLKEPEPEHCP. C25, C39, C42, and C48 together coordinate [4Fe-4S] cluster. 78–85 contributes to the ATP binding site; sequence GKGGVGKS. Residues C251 and C254 each coordinate [4Fe-4S] cluster.

Belongs to the Mrp/NBP35 ATP-binding proteins family. NUBP1/NBP35 subfamily. In terms of assembly, heterotetramer of 2 NBP35 and 2 CFD1 chains. [4Fe-4S] cluster serves as cofactor.

It localises to the cytoplasm. It is found in the nucleus. In terms of biological role, component of the cytosolic iron-sulfur (Fe/S) protein assembly (CIA) machinery. Required for maturation of extramitochondrial Fe-S proteins. The NBP35-CFD1 heterotetramer forms a Fe-S scaffold complex, mediating the de novo assembly of an Fe-S cluster and its transfer to target apoproteins. Required for biogenesis and export of both ribosomal subunits, which may reflect a role in assembly of the Fe/S clusters in RLI1, a protein which performs rRNA processing and ribosome export. The polypeptide is Cytosolic Fe-S cluster assembly factor NBP35 (Kluyveromyces lactis (strain ATCC 8585 / CBS 2359 / DSM 70799 / NBRC 1267 / NRRL Y-1140 / WM37) (Yeast)).